The sequence spans 138 residues: Probable prefoldin subunit 4 (138 aa).

The protein belongs to the prefoldin subunit beta family. Heterohexamer of two PFD-alpha type and four PFD-beta type subunits.

In terms of biological role, binds specifically to cytosolic chaperonin (c-CPN) and transfers target proteins to it. Binds to nascent polypeptide chain and promotes folding in an environment in which there are many competing pathways for nonnative proteins. The sequence is that of Probable prefoldin subunit 4 from Drosophila melanogaster (Fruit fly).